The primary structure comprises 681 residues: Probable L-type lectin-domain containing receptor kinase VII.2 (681 aa).

The first 23 residues, 1 to 23, serve as a signal peptide directing secretion; it reads MFSKVSILLFSLASLLLFRSTTG. The segment at 24–260 is legume-lectin like; the sequence is IEFIYNSNFT…SHRILSWSFS (237 aa). Topologically, residues 24 to 290 are extracellular; it reads IEFIYNSNFT…SGDSVLKSKG (267 aa). N-linked (GlcNAc...) asparagine glycans are attached at residues asparagine 31, asparagine 42, asparagine 56, asparagine 72, asparagine 126, asparagine 202, asparagine 207, asparagine 228, and asparagine 263. A helical transmembrane segment spans residues 291 to 311; sequence FIAGVSSGVVLLVSVIGLLCF. Topologically, residues 312 to 681 are cytoplasmic; sequence YVVRRRRQRL…QTYDSILHGR (370 aa). The 276-residue stretch at 349–624 folds into the Protein kinase domain; the sequence is FSDENMIGYG…VVQILEQGRL (276 aa). ATP contacts are provided by residues 355–363 and lysine 376; that span reads IGYGGNSKV. Residue aspartate 475 is the Proton acceptor of the active site.

The protein in the C-terminal section; belongs to the protein kinase superfamily. Ser/Thr protein kinase family. In the N-terminal section; belongs to the leguminous lectin family.

It is found in the cell membrane. It catalyses the reaction L-seryl-[protein] + ATP = O-phospho-L-seryl-[protein] + ADP + H(+). The enzyme catalyses L-threonyl-[protein] + ATP = O-phospho-L-threonyl-[protein] + ADP + H(+). In Arabidopsis thaliana (Mouse-ear cress), this protein is Probable L-type lectin-domain containing receptor kinase VII.2 (LECRK72).